The chain runs to 273 residues: Bis(5'-nucleosyl)-tetraphosphatase, symmetrical (273 aa).

Belongs to the Ap4A hydrolase family.

The enzyme catalyses P(1),P(4)-bis(5'-adenosyl) tetraphosphate + H2O = 2 ADP + 2 H(+). Its function is as follows. Hydrolyzes diadenosine 5',5'''-P1,P4-tetraphosphate to yield ADP. This chain is Bis(5'-nucleosyl)-tetraphosphatase, symmetrical (apaH), found in Buchnera aphidicola subsp. Schizaphis graminum (strain Sg).